A 246-amino-acid polypeptide reads, in one-letter code: Acetoacetate decarboxylase (246 aa).

K116 acts as the Schiff-base intermediate with acetoacetate in catalysis.

The protein belongs to the ADC family.

The enzyme catalyses acetoacetate + H(+) = acetone + CO2. Catalyzes the conversion of acetoacetate to acetone and carbon dioxide. This Burkholderia multivorans (strain ATCC 17616 / 249) protein is Acetoacetate decarboxylase.